We begin with the raw amino-acid sequence, 73 residues long: MGVFRCCLAAALVVVCLSRMGGTEPLESNHEDERRADDTSGDDCVDTNEDCVNWASTGQCEANPSYMRENCRK.

The signal sequence occupies residues 1–17 (MGVFRCCLAAALVVVCL). A propeptide spanning residues 18–35 (SRMGGTEPLESNHEDERR) is cleaved from the precursor. Residues 22–42 (GTEPLESNHEDERRADDTSGD) are disordered. Positions 27 to 38 (ESNHEDERRADD) are enriched in basic and acidic residues. Positions 44–73 (CVDTNEDCVNWASTGQCEANPSYMRENCRK) constitute a ShKT domain.

Contain 2 disulfide bonds. Expressed by the venom duct.

The protein resides in the secreted. Functionally, probable neurotoxin. This chain is Conotoxin Im14.3, found in Conus imperialis (Imperial cone).